Consider the following 43-residue polypeptide: Protein PsbN (43 aa).

The chain crosses the membrane as a helical span at residues 7 to 27; the sequence is LSIGIAVVVIAVTGFSIYTAF.

This sequence belongs to the PsbN family.

The protein localises to the cellular thylakoid membrane. Its function is as follows. May play a role in photosystem I and II biogenesis. The polypeptide is Protein PsbN (Picosynechococcus sp. (strain ATCC 27264 / PCC 7002 / PR-6) (Agmenellum quadruplicatum)).